Reading from the N-terminus, the 459-residue chain is Argininosuccinate lyase (459 aa).

Belongs to the lyase 1 family. Argininosuccinate lyase subfamily.

It is found in the cytoplasm. The catalysed reaction is 2-(N(omega)-L-arginino)succinate = fumarate + L-arginine. It participates in amino-acid biosynthesis; L-arginine biosynthesis; L-arginine from L-ornithine and carbamoyl phosphate: step 3/3. The sequence is that of Argininosuccinate lyase from Staphylococcus aureus (strain USA300).